The following is a 142-amino-acid chain: Transcriptional regulator MraZ (142 aa).

2 consecutive SpoVT-AbrB domains span residues 5–51 and 77–120; these read ASAL…PRPE and AMDV…DAQT.

The protein belongs to the MraZ family. As to quaternary structure, forms oligomers.

Its subcellular location is the cytoplasm. It localises to the nucleoid. The sequence is that of Transcriptional regulator MraZ from Paraburkholderia phytofirmans (strain DSM 17436 / LMG 22146 / PsJN) (Burkholderia phytofirmans).